The following is a 339-amino-acid chain: tRNA N6-adenosine threonylcarbamoyltransferase (339 aa).

Fe cation-binding residues include H111 and H115. Residues L134–G138, D167, G180, and N272 contribute to the substrate site. D300 lines the Fe cation pocket.

Belongs to the KAE1 / TsaD family. The cofactor is Fe(2+).

It is found in the cytoplasm. The enzyme catalyses L-threonylcarbamoyladenylate + adenosine(37) in tRNA = N(6)-L-threonylcarbamoyladenosine(37) in tRNA + AMP + H(+). Its function is as follows. Required for the formation of a threonylcarbamoyl group on adenosine at position 37 (t(6)A37) in tRNAs that read codons beginning with adenine. Is involved in the transfer of the threonylcarbamoyl moiety of threonylcarbamoyl-AMP (TC-AMP) to the N6 group of A37, together with TsaE and TsaB. TsaD likely plays a direct catalytic role in this reaction. This is tRNA N6-adenosine threonylcarbamoyltransferase from Sodalis glossinidius (strain morsitans).